Reading from the N-terminus, the 399-residue chain is Probable dual-specificity RNA methyltransferase RlmN (399 aa).

E102 functions as the Proton acceptor in the catalytic mechanism. Residues 108-385 (YLDRATVCVS…CTVRVERGVA (278 aa)) form the Radical SAM core domain. Cysteines 115 and 390 form a disulfide. C122, C126, and C129 together coordinate [4Fe-4S] cluster. S-adenosyl-L-methionine contacts are provided by residues 207-208 (GE), S239, 262-264 (SLH), and N347. Catalysis depends on C390, which acts as the S-methylcysteine intermediate.

This sequence belongs to the radical SAM superfamily. RlmN family. The cofactor is [4Fe-4S] cluster.

It is found in the cytoplasm. The catalysed reaction is adenosine(2503) in 23S rRNA + 2 reduced [2Fe-2S]-[ferredoxin] + 2 S-adenosyl-L-methionine = 2-methyladenosine(2503) in 23S rRNA + 5'-deoxyadenosine + L-methionine + 2 oxidized [2Fe-2S]-[ferredoxin] + S-adenosyl-L-homocysteine. It carries out the reaction adenosine(37) in tRNA + 2 reduced [2Fe-2S]-[ferredoxin] + 2 S-adenosyl-L-methionine = 2-methyladenosine(37) in tRNA + 5'-deoxyadenosine + L-methionine + 2 oxidized [2Fe-2S]-[ferredoxin] + S-adenosyl-L-homocysteine. Functionally, specifically methylates position 2 of adenine 2503 in 23S rRNA and position 2 of adenine 37 in tRNAs. The polypeptide is Probable dual-specificity RNA methyltransferase RlmN (Roseiflexus castenholzii (strain DSM 13941 / HLO8)).